The primary structure comprises 851 residues: Nucleolar RNA helicase 2 (851 aa).

The disordered stretch occupies residues 1–260 (MPGKLRSGAK…IPVEQKEGAF (260 aa)). Residues serine 7 and serine 13 each carry the phosphoserine modification. 2 stretches are compositionally biased toward basic and acidic residues: residues 26–42 (PSEK…KTEE) and 99–113 (EPLE…KEII). At lysine 39 the chain carries N6-acetyllysine. A run of 3 repeats spans residues 117 to 153 (PSEE…GLSQ), 154 to 190 (PSEE…GLSQ), and 191 to 227 (PSEE…GLSQ). Positions 117 to 227 (PSEEEADMPK…SPRLKDGLSQ (111 aa)) are 3 X 37 AA tandem repeats. A Phosphoserine modification is found at serine 118. The span at 133–145 (GKEANGDAGEKSP) shows a compositional bias: basic and acidic residues. At lysine 134 the chain carries N6-acetyllysine. Phosphoserine occurs at positions 144, 155, 181, 192, 218, 236, 243, 244, and 245. A compositionally biased stretch (basic and acidic residues) spans 170-182 (GKEANGDAGEKSP). The segment covering 207–223 (GKEASGDAGEKSPRLKD) has biased composition (basic and acidic residues). Over residues 226–237 (SQPSEPKSNSSD) the composition is skewed to polar residues. The segment covering 246-257 (ETEKEIPVEQKE) has biased composition (basic and acidic residues). The Q motif signature appears at 258–286 (GAFSNFPISEETVKLLKARGVNFLFPIQA). The Helicase ATP-binding domain occupies 289–468 (FHHVYSGKDL…KKYMKSTYEQ (180 aa)). Residue 302–309 (ARTGTGKT) participates in ATP binding. Threonine 368 is modified (phosphothreonine). The short motif at 411-414 (DEVD) is the DEAD box element. The 145-residue stretch at 501-645 (DVIRVYSGHQ…GVPSATEIIK (145 aa)) folds into the Helicase C-terminal domain. A Phosphoserine modification is found at serine 639. Residue lysine 672 is modified to N6-acetyllysine. The segment at 783-851 (QPELEGPPDG…KRSFSKAFGQ (69 aa)) is disordered. Tandem repeats lie at residues 807 to 811 (FRGQR), 817 to 823 (FRGQGQR), and 829 to 833 (FRGQR). A 3 X 5 AA repeats region spans residues 807 to 833 (FRGQRGGSRNFRGQGQRGGSRNFRGQR). An N6-acetyllysine modification is found at lysine 847.

This sequence belongs to the DEAD box helicase family. DDX21/DDX50 subfamily. In terms of assembly, homodimer; homodimerizes via its N-terminus. Found in a multi-helicase-TICAM1 complex at least composed of DHX36, DDX1, DDX21 and TICAM1; this complex exists in resting cells with or without poly(I:C) RNA ligand stimulation. Interacts (via C-terminus) with TICAM1 (via TIR domain). Interacts with DHX36 (via C-terminus); this interaction serves as bridges to TICAM1. Interacts (via C-terminus) with DDX1 (via B30.2/SPRY domain); this interaction serves as bridges to TICAM1. Component of the B-WICH complex, at least composed of SMARCA5/SNF2H, BAZ1B/WSTF, SF3B1, DEK, MYO1C, ERCC6, MYBBP1A and DDX21. Interacts with C1QBP. Interacts with JUN. Interacts with WDR46. Interacts with MCM3AP. Interacts with WDR43. Interacts with KPNA3. Interacts with GID4. In terms of processing, acetylation by CREBBP/CBP inhibits the helicase activity. Deacetylation by SIRT7 promotes the helicase activity and overcomes R-loop-mediated stalling of RNA polymerases. In terms of tissue distribution, highly expressed in liver and testis. Expressed at lower level in brain, lungs, and skeletal muscle.

It localises to the nucleus. It is found in the nucleolus. The protein localises to the nucleoplasm. Its subcellular location is the cytoplasm. The protein resides in the cytosol. It localises to the mitochondrion. The enzyme catalyses ATP + H2O = ADP + phosphate + H(+). Its activity is regulated as follows. Acetylation inhibits the helicase activity. Functionally, RNA helicase that acts as a sensor of the transcriptional status of both RNA polymerase (Pol) I and II: promotes ribosomal RNA (rRNA) processing and transcription from polymerase II (Pol II). Binds various RNAs, such as rRNAs, snoRNAs, 7SK and, at lower extent, mRNAs. In the nucleolus, localizes to rDNA locus, where it directly binds rRNAs and snoRNAs, and promotes rRNA transcription, processing and modification. Required for rRNA 2'-O-methylation, possibly by promoting the recruitment of late-acting snoRNAs SNORD56 and SNORD58 with pre-ribosomal complexes. In the nucleoplasm, binds 7SK RNA and is recruited to the promoters of Pol II-transcribed genes: acts by facilitating the release of P-TEFb from inhibitory 7SK snRNP in a manner that is dependent on its helicase activity, thereby promoting transcription of its target genes. Functions as cofactor for JUN-activated transcription: required for phosphorylation of JUN at 'Ser-77'. Can unwind double-stranded RNA (helicase) and can fold or introduce a secondary structure to a single-stranded RNA (foldase). Together with SIRT7, required to prevent R-loop-associated DNA damage and transcription-associated genomic instability: deacetylation by SIRT7 activates the helicase activity, thereby overcoming R-loop-mediated stalling of RNA polymerases. Involved in rRNA processing. May bind to specific miRNA hairpins. Component of a multi-helicase-TICAM1 complex that acts as a cytoplasmic sensor of viral double-stranded RNA (dsRNA) and plays a role in the activation of a cascade of antiviral responses including the induction of pro-inflammatory cytokines via the adapter molecule TICAM1. This chain is Nucleolar RNA helicase 2 (Ddx21), found in Mus musculus (Mouse).